Here is a 325-residue protein sequence, read N- to C-terminus: Delta(1)-pyrroline-2-carboxylate reductase (325 aa).

Belongs to the ornithine cyclodeaminase/mu-crystallin family.

It catalyses the reaction L-proline + NAD(+) = 1-pyrroline-2-carboxylate + NADH + H(+). The catalysed reaction is L-proline + NADP(+) = 1-pyrroline-2-carboxylate + NADPH + H(+). Its function is as follows. Catalyzes the reduction of Delta(1)-pyrroline-2-carboxylate (Pyr2C) to L-proline, using preferentially NADPH over NADH as the electron donor. May be involved in a degradation pathway that converts trans-3-hydroxy-L-proline (t3LHyp) to L-proline. The chain is Delta(1)-pyrroline-2-carboxylate reductase from Bacillus cereus (strain ZK / E33L).